A 359-amino-acid polypeptide reads, in one-letter code: Peptide chain release factor 1 (359 aa).

At Gln236 the chain carries N5-methylglutamine. Residues 286–305 are disordered; sequence KKEMERSTMRKSQIGSGDRS.

This sequence belongs to the prokaryotic/mitochondrial release factor family. Methylated by PrmC. Methylation increases the termination efficiency of RF1.

Its subcellular location is the cytoplasm. Peptide chain release factor 1 directs the termination of translation in response to the peptide chain termination codons UAG and UAA. In Wolbachia pipientis wMel, this protein is Peptide chain release factor 1.